The chain runs to 434 residues: Serine--tRNA ligase (434 aa).

239–241 contacts L-serine; it reads TAE. 270–272 provides a ligand contact to ATP; sequence RSE. An L-serine-binding site is contributed by glutamate 293. Residue 357–360 coordinates ATP; the sequence is EISS. An L-serine-binding site is contributed by serine 393.

The protein belongs to the class-II aminoacyl-tRNA synthetase family. Type-1 seryl-tRNA synthetase subfamily. Homodimer. The tRNA molecule binds across the dimer.

It is found in the cytoplasm. The enzyme catalyses tRNA(Ser) + L-serine + ATP = L-seryl-tRNA(Ser) + AMP + diphosphate + H(+). It carries out the reaction tRNA(Sec) + L-serine + ATP = L-seryl-tRNA(Sec) + AMP + diphosphate + H(+). The protein operates within aminoacyl-tRNA biosynthesis; selenocysteinyl-tRNA(Sec) biosynthesis; L-seryl-tRNA(Sec) from L-serine and tRNA(Sec): step 1/1. Its function is as follows. Catalyzes the attachment of serine to tRNA(Ser). Is also able to aminoacylate tRNA(Sec) with serine, to form the misacylated tRNA L-seryl-tRNA(Sec), which will be further converted into selenocysteinyl-tRNA(Sec). The protein is Serine--tRNA ligase of Mesorhizobium japonicum (strain LMG 29417 / CECT 9101 / MAFF 303099) (Mesorhizobium loti (strain MAFF 303099)).